Reading from the N-terminus, the 512-residue chain is Maturase K (512 aa).

This sequence belongs to the intron maturase 2 family. MatK subfamily.

It is found in the plastid. The protein localises to the chloroplast. Usually encoded in the trnK tRNA gene intron. Probably assists in splicing its own and other chloroplast group II introns. The sequence is that of Maturase K from Lilium henryi (Henry's lily).